The following is a 179-amino-acid chain: Probable phosphopantothenoylcysteine decarboxylase (179 aa).

Residue N124 participates in substrate binding. C157 (proton donor) is an active-site residue.

Belongs to the HFCD (homooligomeric flavin containing Cys decarboxylase) superfamily. It depends on FMN as a cofactor.

It catalyses the reaction N-[(R)-4-phosphopantothenoyl]-L-cysteine + H(+) = (R)-4'-phosphopantetheine + CO2. The protein operates within cofactor biosynthesis; coenzyme A biosynthesis; CoA from (R)-pantothenate: step 3/5. Functionally, catalyzes the decarboxylation of 4'-phosphopantothenoylcysteine to 4'-phosphopantetheine. This Streptococcus mutans serotype c (strain ATCC 700610 / UA159) protein is Probable phosphopantothenoylcysteine decarboxylase (coaC).